Here is a 229-residue protein sequence, read N- to C-terminus: Ribonuclease 3 (229 aa).

Residues 4-133 enclose the RNase III domain; that stretch reads WEELQESVGF…FIGALYLDNG (130 aa). Mg(2+) is bound at residue Glu46. Asp50 is a catalytic residue. Positions 119 and 122 each coordinate Mg(2+). Glu122 is an active-site residue. In terms of domain architecture, DRBM spans 159 to 228; the sequence is DYKTQLQEIV…AQFAINQLTH (70 aa).

The protein belongs to the ribonuclease III family. In terms of assembly, homodimer. Mg(2+) is required as a cofactor.

It is found in the cytoplasm. The enzyme catalyses Endonucleolytic cleavage to 5'-phosphomonoester.. Functionally, digests double-stranded RNA. Involved in the processing of primary rRNA transcript to yield the immediate precursors to the large and small rRNAs (23S and 16S). Processes some mRNAs, and tRNAs when they are encoded in the rRNA operon. Processes pre-crRNA and tracrRNA of type II CRISPR loci if present in the organism. In Listeria innocua serovar 6a (strain ATCC BAA-680 / CLIP 11262), this protein is Ribonuclease 3.